Here is a 490-residue protein sequence, read N- to C-terminus: ATP synthase subunit beta (490 aa).

173 to 180 is an ATP binding site; that stretch reads GGAGVGKT.

The protein belongs to the ATPase alpha/beta chains family. In terms of assembly, F-type ATPases have 2 components, CF(1) - the catalytic core - and CF(0) - the membrane proton channel. CF(1) has five subunits: alpha(3), beta(3), gamma(1), delta(1), epsilon(1). CF(0) has three main subunits: a(1), b(2) and c(9-12). The alpha and beta chains form an alternating ring which encloses part of the gamma chain. CF(1) is attached to CF(0) by a central stalk formed by the gamma and epsilon chains, while a peripheral stalk is formed by the delta and b chains.

The protein localises to the cell membrane. The enzyme catalyses ATP + H2O + 4 H(+)(in) = ADP + phosphate + 5 H(+)(out). Produces ATP from ADP in the presence of a proton gradient across the membrane. The catalytic sites are hosted primarily by the beta subunits. The chain is ATP synthase subunit beta from Bifidobacterium longum (strain DJO10A).